A 513-amino-acid polypeptide reads, in one-letter code: NAD(P)H-quinone oxidoreductase subunit 2, chloroplastic (513 aa).

Helical transmembrane passes span 11-31, 38-58, 78-98, 112-132, 133-153, 167-187, 219-239, 256-276, 290-310, 318-338, 348-368, 389-409, 422-442, and 478-498; these read NLIT…ILMI, SVWL…ILLF, GFTI…IPLS, FLIL…ANDL, VTIF…AGQA, LLMG…LYGL, FGAL…GFKI, PTPV…ALAT, WHIV…LIAA, MLAY…LVGN, YLLI…IFGL, AFAL…AGFF, HLYL…YYYL, and LGLT…NPLI.

Belongs to the complex I subunit 2 family. In terms of assembly, NDH is composed of at least 16 different subunits, 5 of which are encoded in the nucleus.

The protein localises to the plastid. It is found in the chloroplast thylakoid membrane. It catalyses the reaction a plastoquinone + NADH + (n+1) H(+)(in) = a plastoquinol + NAD(+) + n H(+)(out). The catalysed reaction is a plastoquinone + NADPH + (n+1) H(+)(in) = a plastoquinol + NADP(+) + n H(+)(out). In terms of biological role, NDH shuttles electrons from NAD(P)H:plastoquinone, via FMN and iron-sulfur (Fe-S) centers, to quinones in the photosynthetic chain and possibly in a chloroplast respiratory chain. The immediate electron acceptor for the enzyme in this species is believed to be plastoquinone. Couples the redox reaction to proton translocation, and thus conserves the redox energy in a proton gradient. The chain is NAD(P)H-quinone oxidoreductase subunit 2, chloroplastic from Staurastrum punctulatum (Green alga).